Consider the following 276-residue polypeptide: Protein SCO1 homolog 2, mitochondrial (276 aa).

The N-terminal 14 residues, 1 to 14 (MLPCRRLVLSCKNQ), are a transit peptide targeting the mitochondrion. The helical transmembrane segment at 66 to 82 (YAVPAILLGFAGFVGFL) threads the bilayer. Positions 110–273 (VKGPIIGGPF…SQELLKEVAS (164 aa)) constitute a Thioredoxin domain.

It belongs to the SCO1/2 family. Expressed in the whole plant with highest expression in imbibed seeds and embryos, and the root hair zone.

It localises to the mitochondrion inner membrane. Thought to play a role in cellular copper homeostasis, mitochondrial redox signaling or insertion of copper into the active site of COX. Participates in copper and redox homeostasis. This is Protein SCO1 homolog 2, mitochondrial (HCC2) from Arabidopsis thaliana (Mouse-ear cress).